We begin with the raw amino-acid sequence, 217 residues long: Segregation and condensation protein B (217 aa).

It belongs to the ScpB family. Homodimer. Homodimerization may be required to stabilize the binding of ScpA to the Smc head domains. Component of a cohesin-like complex composed of ScpA, ScpB and the Smc homodimer, in which ScpA and ScpB bind to the head domain of Smc. The presence of the three proteins is required for the association of the complex with DNA.

It localises to the cytoplasm. Participates in chromosomal partition during cell division. May act via the formation of a condensin-like complex containing Smc and ScpA that pull DNA away from mid-cell into both cell halves. This Geobacillus kaustophilus (strain HTA426) protein is Segregation and condensation protein B.